Consider the following 179-residue polypeptide: MQQNIIKVIVGSKNPVKVNAAANAMTLLFPEYQIQTIGMDAPSGVPAQPMTDSDTRQGAINRVNYCQQHAEADYYFAMEGGVDHFEFGPATFAYIAIAHQQRLSIGRGALLPLPRQVYQALEAGEELGHVMDRLFNTVNIKQKGGAIGLLTHGHATRESNYTQALILAMAPFLNPEIYL.

Glu-71 lines the Mg(2+) pocket. 71–72 (EA) provides a ligand contact to substrate.

This sequence belongs to the YjjX NTPase family. Homodimer. It depends on Mg(2+) as a cofactor. The cofactor is Mn(2+).

The enzyme catalyses XTP + H2O = XDP + phosphate + H(+). It carries out the reaction ITP + H2O = IDP + phosphate + H(+). Functionally, phosphatase that hydrolyzes non-canonical purine nucleotides such as XTP and ITP to their respective diphosphate derivatives. Probably excludes non-canonical purines from DNA/RNA precursor pool, thus preventing their incorporation into DNA/RNA and avoiding chromosomal lesions. The polypeptide is Inosine/xanthosine triphosphatase (Shewanella oneidensis (strain ATCC 700550 / JCM 31522 / CIP 106686 / LMG 19005 / NCIMB 14063 / MR-1)).